A 102-amino-acid polypeptide reads, in one-letter code: Putative septation protein SpoVG 1 (102 aa).

The protein belongs to the SpoVG family.

Its function is as follows. Could be involved in septation. This chain is Putative septation protein SpoVG 1, found in Listeria monocytogenes serotype 4b (strain F2365).